A 530-amino-acid chain; its full sequence is Bifunctional purine biosynthesis protein PurH (530 aa).

The MGS-like domain maps to 1–148 (MNNARPIRRA…KNHKDVTIVV (148 aa)).

It belongs to the PurH family.

The enzyme catalyses (6R)-10-formyltetrahydrofolate + 5-amino-1-(5-phospho-beta-D-ribosyl)imidazole-4-carboxamide = 5-formamido-1-(5-phospho-D-ribosyl)imidazole-4-carboxamide + (6S)-5,6,7,8-tetrahydrofolate. It catalyses the reaction IMP + H2O = 5-formamido-1-(5-phospho-D-ribosyl)imidazole-4-carboxamide. It functions in the pathway purine metabolism; IMP biosynthesis via de novo pathway; 5-formamido-1-(5-phospho-D-ribosyl)imidazole-4-carboxamide from 5-amino-1-(5-phospho-D-ribosyl)imidazole-4-carboxamide (10-formyl THF route): step 1/1. Its pathway is purine metabolism; IMP biosynthesis via de novo pathway; IMP from 5-formamido-1-(5-phospho-D-ribosyl)imidazole-4-carboxamide: step 1/1. This is Bifunctional purine biosynthesis protein PurH from Vibrio atlanticus (strain LGP32) (Vibrio splendidus (strain Mel32)).